The following is a 101-amino-acid chain: Floral defensin-like protein 2 (101 aa).

The N-terminal stretch at 1–25 is a signal peptide; that stretch reads MARSICFFAVAILALMLFAAYETEA. Cystine bridges form between C28-C74, C32-C48, C39-C61, C45-C68, and C49-C70. The propeptide at 75–101 is removed in mature form; sequence ATEEATATLANEVKTMAEALVEEDMME.

It belongs to the DEFL family. When compared to other plant defensins, the petunia defensins have an additional fifth disulfide bond. As to expression, petals.

It localises to the secreted. The protein localises to the vacuole. Functionally, plant defense peptide with antifungal activity against F.oxysporum and B.cinerea. The chain is Floral defensin-like protein 2 (D2) from Petunia hybrida (Petunia).